Here is a 469-residue protein sequence, read N- to C-terminus: Neuraminidase (469 aa).

Residues methionine 1–threonine 9 lie on the Intravirion side of the membrane. A helical transmembrane segment spans residues isoleucine 10–valine 30. Positions glycine 11–valine 33 are involved in apical transport and lipid raft association. At threonine 31–isoleucine 469 the chain is on the virion surface side. The interval histidine 36–serine 88 is hypervariable stalk region. N-linked (GlcNAc...) asparagine; by host glycosylation is found at asparagine 61, asparagine 69, asparagine 70, and asparagine 86. Residues glutamine 91–isoleucine 469 are head of neuraminidase. 9 cysteine pairs are disulfide-bonded: cysteine 92-cysteine 417, cysteine 124-cysteine 129, cysteine 175-cysteine 193, cysteine 183-cysteine 230, cysteine 232-cysteine 237, cysteine 278-cysteine 291, cysteine 280-cysteine 289, cysteine 318-cysteine 337, and cysteine 421-cysteine 447. Arginine 118 is a substrate binding site. Asparagine 146 carries N-linked (GlcNAc...) asparagine; by host glycosylation. The active-site Proton donor/acceptor is aspartate 151. Arginine 152 is a binding site for substrate. 2 N-linked (GlcNAc...) asparagine; by host glycosylation sites follow: asparagine 200 and asparagine 234. Glutamate 276–glutamate 277 is a binding site for substrate. Arginine 292 is a substrate binding site. 3 residues coordinate Ca(2+): aspartate 293, glycine 297, and aspartate 324. The disordered stretch occupies residues aspartate 324–valine 349. The span at serine 333–asparagine 342 shows a compositional bias: low complexity. Ca(2+)-binding residues include glycine 345, threonine 346, and glutamine 347. A substrate-binding site is contributed by arginine 371. Asparagine 402 is a glycosylation site (N-linked (GlcNAc...) asparagine; by host). The active-site Nucleophile is tyrosine 406.

The protein belongs to the glycosyl hydrolase 34 family. As to quaternary structure, homotetramer. Requires Ca(2+) as cofactor. In terms of processing, N-glycosylated.

Its subcellular location is the virion membrane. The protein localises to the host apical cell membrane. It carries out the reaction Hydrolysis of alpha-(2-&gt;3)-, alpha-(2-&gt;6)-, alpha-(2-&gt;8)- glycosidic linkages of terminal sialic acid residues in oligosaccharides, glycoproteins, glycolipids, colominic acid and synthetic substrates.. With respect to regulation, inhibited by the neuraminidase inhibitors zanamivir (Relenza) and oseltamivir (Tamiflu). These drugs interfere with the release of progeny virus from infected cells and are effective against all influenza strains. Resistance to neuraminidase inhibitors is quite rare. In terms of biological role, catalyzes the removal of terminal sialic acid residues from viral and cellular glycoconjugates. Cleaves off the terminal sialic acids on the glycosylated HA during virus budding to facilitate virus release. Additionally helps virus spread through the circulation by further removing sialic acids from the cell surface. These cleavages prevent self-aggregation and ensure the efficient spread of the progeny virus from cell to cell. Otherwise, infection would be limited to one round of replication. Described as a receptor-destroying enzyme because it cleaves a terminal sialic acid from the cellular receptors. May facilitate viral invasion of the upper airways by cleaving the sialic acid moieties on the mucin of the airway epithelial cells. Likely to plays a role in the budding process through its association with lipid rafts during intracellular transport. May additionally display a raft-association independent effect on budding. Plays a role in the determination of host range restriction on replication and virulence. Sialidase activity in late endosome/lysosome traffic seems to enhance virus replication. In Aves (Human), this protein is Neuraminidase.